A 445-amino-acid polypeptide reads, in one-letter code: WD repeat domain phosphoinositide-interacting protein 2 (445 aa).

A WD 1 repeat occupies alanine 182–glutamate 222. The L/FRRG motif motif lies at phenylalanine 223–glycine 226. WD repeat units lie at residues lysine 228–proline 267 and glycine 311–cysteine 349. Phosphoserine is present on serine 395.

The protein belongs to the WD repeat PROPPIN family. Interacts with TECPR1. Interacts with ATG16L1. Interacts with ATG5. Interacts with WIPI1. Interacts with WDR45. May interact with NUDC. Interacts with ULK1 and RB1CC1.

Its subcellular location is the preautophagosomal structure membrane. Functionally, component of the autophagy machinery that controls the major intracellular degradation process by which cytoplasmic materials are packaged into autophagosomes and delivered to lysosomes for degradation. Involved in an early step of the formation of preautophagosomal structures. Binds and is activated by phosphatidylinositol 3-phosphate (PtdIns3P) forming on membranes of the endoplasmic reticulum upon activation of the upstream ULK1 and PI3 kinases. Mediates ER-isolation membranes contacts by interacting with the ULK1:RB1CC1 complex and PtdIns3P. Once activated, WIPI2 recruits at phagophore assembly sites the ATG12-ATG5-ATG16L1 complex that directly controls the elongation of the nascent autophagosomal membrane. The protein is WD repeat domain phosphoinositide-interacting protein 2 of Mus musculus (Mouse).